Consider the following 628-residue polypeptide: MAELGELKHMVMSFRVSELQVLLGFAGRNKSGRKHELLAKALHLLKSSCAPSVQMKIKELYRRRFPRKTLGPSDLSLLSLPPGTSPVGSPSPLASIPPTLLTPGTLLGPKREVDMHPPLPQPVHPDVTMKPLPFYEVYGELIRPTTLASTSSQRFEEAHFTFALTPQQLQQILTSREVLPGAKCDYTIQVQLRFCLCETSCPQEDYFPPNLFVKVNGKLCPLPGYLPPTKNGAEPKRPSRPINITPLARLSATVPNTIVVNWSSEFGRNYSLSVYLVRQLTAGTLLQKLRAKGIRNPDHSRALIKEKLTADPDSEVATTSLRVSLMCPLGKMRLTVPCRALTCAHLQSFDAALYLQMNEKKPTWTCPVCDKKAPYESLIIDGLFMEILNSCSDCDEIQFMEDGSWCPMKPKKEASEVCPPPGYGLDGLQYSPVQEGNQSENKKRVEVIDLTIESSSDEEDLPPTKKHCPVTSAAIPALPGSKGALTSGHQPSSVLRSPAMGTLGSDFLSSLPLHEYPPAFPLGADIQGLDLFSFLQTESQHYSPSVITSLDEQDTLGHFFQFRGTPPHFLGPLAPTLGSSHRSATPAPAPGRVSSIVAPGSSLREGHGGPLPSGPSLTGCRSDVISLD.

Positions methionine 1–serine 200 are interaction with CCAR2. Residues valine 11 to leucine 45 enclose the SAP domain. Positions leucine 19–leucine 23 match the LXXLL motif motif. Glycyl lysine isopeptide (Lys-Gly) (interchain with G-Cter in SUMO2) cross-links involve residues lysine 46 and lysine 56. Residues proline 72–serine 95 form a disordered region. A PINIT domain is found at methionine 115–leucine 280. Glycyl lysine isopeptide (Lys-Gly) (interchain with G-Cter in SUMO2) cross-links involve residues lysine 230 and lysine 307. The SP-RING-type zinc-finger motif lies at proline 312–aspartate 393. Cysteine 343, histidine 345, cysteine 366, and cysteine 369 together coordinate Zn(2+). Residues leucine 450–aspartate 460 are SUMO1-binding. Glycyl lysine isopeptide (Lys-Gly) (interchain with G-Cter in SUMO2) cross-links involve residues lysine 466 and lysine 482. The tract at residues leucine 573 to threonine 618 is disordered.

This sequence belongs to the PIAS family. In terms of assembly, binds SUMO1 and UBE2I. Interacts with AR, BCL11A, GFI1, HMGA2, IRF1, MITF, NCOA2, as well as with STAT3, after treatment with IL6, CNTF or OSM and with STAT5, after PRL stimulation. Interacts with PLAG1. Interacts with ZFHX3. Interacts with MTA1. Interacts with CCAR2 (via N-terminus). Interacts with TRIM8. Interacts with PRDM1. Sumoylated. Widely expressed, with highest levels in lung, kidney and spleen.

Its subcellular location is the cytoplasm. The protein resides in the nucleus. It is found in the nucleus speckle. It participates in protein modification; protein sumoylation. Functions as an E3-type small ubiquitin-like modifier (SUMO) ligase, stabilizing the interaction between UBE2I and the substrate, and as a SUMO-tethering factor. Plays a crucial role as a transcriptional coregulation in various cellular pathways, including the STAT pathway and the steroid hormone signaling pathway. The effects of this transcriptional coregulation, transactivation or silencing, may vary depending upon the biological context. Enhances the sumoylation of MTA1 and may participate in its paralog-selective sumoylation. Sumoylates CCAR2 which promotes its interaction with SIRT1. Diminishes the sumoylation of ZFHX3 by preventing the colocalization of ZFHX3 with SUMO1 in the nucleus. The protein is E3 SUMO-protein ligase PIAS3 (Pias3) of Rattus norvegicus (Rat).